Here is a 435-residue protein sequence, read N- to C-terminus: Nucleosome assembly protein 1 (435 aa).

A disordered region spans residues 1–51 (MTEQPINTKKKNGDISKAPTPQNTPASVTNSYMRSKPPTVSTIQESNNEDG). S16 is modified (phosphoserine). The span at 19-50 (PTPQNTPASVTNSYMRSKPPTVSTIQESNNED) shows a compositional bias: polar residues. 2 positions are modified to phosphothreonine: T20 and T24. At S27 the chain carries Phosphoserine. T29 carries the post-translational modification Phosphothreonine. 2 positions are modified to phosphoserine: S31 and S35. The residue at position 42 (T42) is a Phosphothreonine. At S46 the chain carries Phosphoserine. At T52 the chain carries Phosphothreonine. 2 stretches are compositionally biased toward acidic residues: residues 146–185 (PTVE…EDEQ) and 338–355 (EAND…DEEL). Disordered regions lie at residues 146–187 (PTVE…EQGI) and 308–435 (ESFF…CKQQ). The segment covering 356 to 374 (EARLELDYQLGEEIKDRLI) has biased composition (basic and acidic residues). The span at 386 to 421 (VDFDYPELEGEGDEDEYSDEDGEGDSDDDDDDDDEA) shows a compositional bias: acidic residues.

This sequence belongs to the nucleosome assembly protein (NAP) family. In terms of assembly, component of the GIN4 complex which forms a ring at the bud neck. Post-translationally, phosphorylation is cell cycle dependent and is important for its bud neck localization. Phosphorylation is highest in newly collected G1 cells, declines when the cells are traversing through the G1 phase, and reaches the lowest level around the time of bud emergence. Phosphorylation increases and remains high through the rest of the cell cycle until the beginning of the next one, when it decreases again. Phosphorylation involves two septin ring-associated kinases, CLA4 and GIN4, and its dephosphorylation occurs at the septin ring in a manner dependent on the phosphatases PP2A and CDC14.

It is found in the bud neck. Its subcellular location is the bud tip. In terms of biological role, acidic protein, which assembles histones into an octamer. Involved in the regulation of the localization and the function of the septins during mitosis. This is Nucleosome assembly protein 1 (NAP1) from Candida albicans (strain SC5314 / ATCC MYA-2876) (Yeast).